Consider the following 273-residue polypeptide: 4-hydroxy-tetrahydrodipicolinate reductase (273 aa).

Residues 11 to 16 and 106 to 108 contribute to the NAD(+) site; these read GATGKM and GTT. The active-site Proton donor/acceptor is His-162. His-163 provides a ligand contact to (S)-2,3,4,5-tetrahydrodipicolinate. Residue Lys-166 is the Proton donor of the active site. Residue 172–173 coordinates (S)-2,3,4,5-tetrahydrodipicolinate; that stretch reads GT.

Belongs to the DapB family.

The protein resides in the cytoplasm. It carries out the reaction (S)-2,3,4,5-tetrahydrodipicolinate + NAD(+) + H2O = (2S,4S)-4-hydroxy-2,3,4,5-tetrahydrodipicolinate + NADH + H(+). The catalysed reaction is (S)-2,3,4,5-tetrahydrodipicolinate + NADP(+) + H2O = (2S,4S)-4-hydroxy-2,3,4,5-tetrahydrodipicolinate + NADPH + H(+). Its pathway is amino-acid biosynthesis; L-lysine biosynthesis via DAP pathway; (S)-tetrahydrodipicolinate from L-aspartate: step 4/4. In terms of biological role, catalyzes the conversion of 4-hydroxy-tetrahydrodipicolinate (HTPA) to tetrahydrodipicolinate. The polypeptide is 4-hydroxy-tetrahydrodipicolinate reductase (Synechococcus sp. (strain ATCC 27144 / PCC 6301 / SAUG 1402/1) (Anacystis nidulans)).